The following is a 281-amino-acid chain: Bifunctional protein FolD (281 aa).

NADP(+) is bound by residues 164–166, Ile-189, and Ile-230; that span reads GAS.

Belongs to the tetrahydrofolate dehydrogenase/cyclohydrolase family. Homodimer.

The catalysed reaction is (6R)-5,10-methylene-5,6,7,8-tetrahydrofolate + NADP(+) = (6R)-5,10-methenyltetrahydrofolate + NADPH. It carries out the reaction (6R)-5,10-methenyltetrahydrofolate + H2O = (6R)-10-formyltetrahydrofolate + H(+). It functions in the pathway one-carbon metabolism; tetrahydrofolate interconversion. In terms of biological role, catalyzes the oxidation of 5,10-methylenetetrahydrofolate to 5,10-methenyltetrahydrofolate and then the hydrolysis of 5,10-methenyltetrahydrofolate to 10-formyltetrahydrofolate. The polypeptide is Bifunctional protein FolD (Sulfurovum sp. (strain NBC37-1)).